Reading from the N-terminus, the 427-residue chain is Enolase (427 aa).

Glutamine 163 serves as a coordination point for (2R)-2-phosphoglycerate. The active-site Proton donor is the glutamate 205. Mg(2+) contacts are provided by aspartate 242, glutamate 285, and aspartate 312. Positions 337, 366, 367, and 388 each coordinate (2R)-2-phosphoglycerate. The active-site Proton acceptor is the lysine 337.

It belongs to the enolase family. Mg(2+) is required as a cofactor.

Its subcellular location is the cytoplasm. It is found in the secreted. It localises to the cell surface. The catalysed reaction is (2R)-2-phosphoglycerate = phosphoenolpyruvate + H2O. It participates in carbohydrate degradation; glycolysis; pyruvate from D-glyceraldehyde 3-phosphate: step 4/5. Its function is as follows. Catalyzes the reversible conversion of 2-phosphoglycerate (2-PG) into phosphoenolpyruvate (PEP). It is essential for the degradation of carbohydrates via glycolysis. The protein is Enolase of Rhodopseudomonas palustris (strain BisB5).